The following is a 180-amino-acid chain: NADH-quinone oxidoreductase subunit I (180 aa).

4Fe-4S ferredoxin-type domains lie at 48–80 (IVLTRDPDGDERCVACNLCAVACPVGCISLQKA) and 90–119 (EFFRINFSRCIFCGLCEEACPTTAIQLTPD). [4Fe-4S] cluster is bound by residues cysteine 60, cysteine 63, cysteine 66, cysteine 70, cysteine 99, cysteine 102, cysteine 105, and cysteine 109. The segment covering 161–174 (KPKGDAEHEAKPID) has biased composition (basic and acidic residues). The tract at residues 161 to 180 (KPKGDAEHEAKPIDVKSLLP) is disordered.

It belongs to the complex I 23 kDa subunit family. In terms of assembly, NDH-1 is composed of 14 different subunits. Subunits NuoA, H, J, K, L, M, N constitute the membrane sector of the complex. Requires [4Fe-4S] cluster as cofactor.

The protein resides in the cell inner membrane. The enzyme catalyses a quinone + NADH + 5 H(+)(in) = a quinol + NAD(+) + 4 H(+)(out). In terms of biological role, NDH-1 shuttles electrons from NADH, via FMN and iron-sulfur (Fe-S) centers, to quinones in the respiratory chain. The immediate electron acceptor for the enzyme in this species is believed to be ubiquinone. Couples the redox reaction to proton translocation (for every two electrons transferred, four hydrogen ions are translocated across the cytoplasmic membrane), and thus conserves the redox energy in a proton gradient. The protein is NADH-quinone oxidoreductase subunit I of Aeromonas salmonicida (strain A449).